The sequence spans 851 residues: Alanine--tRNA ligase (851 aa).

Zn(2+) is bound by residues histidine 535, histidine 539, cysteine 637, and histidine 641.

It belongs to the class-II aminoacyl-tRNA synthetase family. It depends on Zn(2+) as a cofactor.

It is found in the cytoplasm. It carries out the reaction tRNA(Ala) + L-alanine + ATP = L-alanyl-tRNA(Ala) + AMP + diphosphate. Functionally, catalyzes the attachment of alanine to tRNA(Ala) in a two-step reaction: alanine is first activated by ATP to form Ala-AMP and then transferred to the acceptor end of tRNA(Ala). Also edits incorrectly charged Ser-tRNA(Ala) and Gly-tRNA(Ala) via its editing domain. The chain is Alanine--tRNA ligase from Acholeplasma laidlawii (strain PG-8A).